The following is a 259-amino-acid chain: Type III pantothenate kinase (259 aa).

Asp-6–Thr-13 serves as a coordination point for ATP. Gly-113–Arg-116 is a substrate binding site. Asp-115 functions as the Proton acceptor in the catalytic mechanism. Asp-135 is a K(+) binding site. An ATP-binding site is contributed by Thr-138. Position 190 (Thr-190) interacts with substrate.

It belongs to the type III pantothenate kinase family. Homodimer. The cofactor is NH4(+). K(+) is required as a cofactor.

It localises to the cytoplasm. The catalysed reaction is (R)-pantothenate + ATP = (R)-4'-phosphopantothenate + ADP + H(+). Its pathway is cofactor biosynthesis; coenzyme A biosynthesis; CoA from (R)-pantothenate: step 1/5. In terms of biological role, catalyzes the phosphorylation of pantothenate (Pan), the first step in CoA biosynthesis. This Endomicrobium trichonymphae protein is Type III pantothenate kinase.